We begin with the raw amino-acid sequence, 495 residues long: MTGNLVTKNSLTPDVRNGIDFKIADLSLADFGRKELRIAEHEMPGLMSLRREYAEVQPLKGARISGSLHMTVQTAVLIETLTALGAEVRWASCNIFSTQDHAAAAVVVGPHGTPDEPKGVPVFAWKGETLEEYWWAAEQMLTWPDPDKPANMILDDGGDATMLVLRGMQYEKAGVVPPAEEDDPAEWKVFLNLLRTRFETDKDKWTKIAESVKGVTEETTTGVLRLYQFAAAGDLAFPAINVNDSVTKSKFDNKYGTRHSLIDGINRGTDALIGGKKVLICGYGDVGKGCAEAMKGQGARVSVTEIDPINALQAMMEGFDVVTVEEAIGDADIVVTATGNKDIIMLEHIKAMKDHAILGNIGHFDNEIDMAGLERSGATRVNVKPQVDLWTFGDTGRSIIVLSEGRLLNLGNATGHPSFVMSNSFANQTIAQIELWTKNDEYDNEVYRLPKHLDEKVARIHVEALGGHLTKLTKEQAEYLGVDVEGPYKPDHYRY.

Substrate contacts are provided by Thr-71, Asp-156, and Glu-218. 219–221 (TTT) serves as a coordination point for NAD(+). Substrate contacts are provided by Lys-248 and Asp-252. NAD(+)-binding positions include Asn-253, 282-287 (GYGDVG), Glu-305, Asn-340, 361-363 (IGH), and Asn-409.

It belongs to the adenosylhomocysteinase family. The cofactor is NAD(+).

The protein localises to the cytoplasm. The catalysed reaction is S-adenosyl-L-homocysteine + H2O = L-homocysteine + adenosine. It participates in amino-acid biosynthesis; L-homocysteine biosynthesis; L-homocysteine from S-adenosyl-L-homocysteine: step 1/1. Its function is as follows. May play a key role in the regulation of the intracellular concentration of adenosylhomocysteine. The chain is Adenosylhomocysteinase from Mycobacterium tuberculosis (strain ATCC 25177 / H37Ra).